Consider the following 1334-residue polypeptide: WASH complex subunit 2 (1334 aa).

The segment at 1-219 (MNRTSPDSER…VGSDRGSIVD (219 aa)) is sufficient for interaction with WASHC3, WASHC4 and WASHC5; required for interaction with WASHC1. Ser157, Ser159, Ser204, Ser205, and Ser209 each carry phosphoserine. The segment covering 201-213 (GELSSEEGSVGSD) has biased composition (low complexity). The tract at residues 201–471 (GELSSEEGSV…SKPSKTDKVK (271 aa)) is disordered. Acidic residues-rich tracts occupy residues 219 to 232 (DSEDEKEEEESDED) and 249 to 274 (SDEEEDDDGDLFADSEKEGDDIEDIE). Ser284 is modified (phosphoserine). Residues 289-324 (LAARIKGDISNQRKEGQTDGKPQKTVKEKKERRTPA) show a composition bias toward basic and acidic residues. Thr322 carries the phosphothreonine modification. The interval 347–594 (SRGGLFSNGQ…QTSSLQPQSQ (248 aa)) is sufficient for interaction with CCDC93. An interaction with VPS35 region spans residues 348 to 1334 (RGGLFSNGQG…DDPLNAFGSQ (987 aa)). Residues 358–368 (LFDDEDESDLF) carry the LFa 1 motif. Ser388 carries the phosphoserine modification. Short sequence motifs (LFa) lie at residues 441-457 (LFDDDDNDNDEDDNNFF) and 476-485 (IFDDDEGDLF). Positions 442–454 (FDDDDNDNDEDDN) are enriched in acidic residues. A disordered region spans residues 492-650 (LPAASVSQTH…DSGATQGQEA (159 aa)). The segment covering 513-530 (LPSSKNLKLVSETKTQKG) has biased composition (polar residues). 2 consecutive short sequence motifs (LFa) follow at residues 531–542 (LFSDEEDSEDLF) and 566–577 (LFGDEDEEDSLF). A phosphoserine mark is found at Ser533 and Ser538. Low complexity predominate over residues 541-561 (LFSSQSSSKPKSASLPSSQPP). Composition is skewed to polar residues over residues 584–594 (KQTSSLQPQSQ) and 601–611 (EQPSKKTSALL). Phosphoserine is present on residues Ser613 and Ser614. Positions 625–639 (SHTKLASDNKSKGEL) are enriched in basic and acidic residues. Short sequence motifs (LFa) lie at residues 658–670 (LFEDDDDDEVDLF) and 686–698 (LFEDDAESGSSLF). The disordered stretch occupies residues 691 to 837 (AESGSSLFGL…SRPKSTGVFQ (147 aa)). Phosphoserine is present on residues Ser723, Ser747, Ser752, Ser783, and Ser798. Positions 800 to 811 (FDEDEDKVEDES) are enriched in acidic residues. The span at 818-830 (DGREKGLKTDSRP) shows a compositional bias: basic and acidic residues. 2 consecutive short sequence motifs (LFa) follow at residues 835 to 843 (VFQDEELLF) and 852 to 858 (DPDVDLF). 2 disordered regions span residues 862–948 (KKIR…PSSR) and 1014–1225 (AQAD…SKTH). Residues Ser870 and Ser873 each carry the phosphoserine modification. Positions 874–884 (LFGDDEDDDLF) match the LFa 10 motif. Basic and acidic residues predominate over residues 894–906 (PEKKGTLKKDHPV). Over residues 908-919 (LKNQDPLDSTQG) the composition is skewed to polar residues. Residues 932–1334 (QDSSGLTPFK…DDPLNAFGSQ (403 aa)) are interaction with phospholipids. Over residues 1023 to 1041 (NKSRVKVRGKRRPQTRAAR) the composition is skewed to basic residues. Positions 1024–1042 (KSRVKVRGKRRPQTRAARR) are required for interaction with F-actin-capping protein subunit alpha (CAPZA1 or CAPZA2 or CAPZA3). Phosphoserine occurs at positions 1049, 1067, 1084, and 1109. Short sequence motifs (LFa) lie at residues 1124–1131 (LFDSGDIF), 1164–1178 (AFPDLSEGSSTEDLF), and 1194–1202 (LLEDEEDLF). 3 positions are modified to phosphoserine: Ser1169, Ser1172, and Ser1173. Residues 1203-1225 (ADPRGKKNERKPDSHQDSVSKTH) are compositionally biased toward basic and acidic residues. 3 consecutive short sequence motifs (LFa) follow at residues 1227–1233 (IFEDDIF), 1255–1263 (LFDDNIDIF), and 1283–1292 (MFDDDTDDIF). Residues 1294-1334 (SGLQAKASKPKSQSAEAASEQRSEHKVASIFDDPLNAFGSQ) form a disordered region. Residues 1297–1311 (QAKASKPKSQSAEAA) show a composition bias toward low complexity. Residues 1323 to 1331 (IFDDPLNAF) carry the LFa 17 motif. Ser1333 carries the post-translational modification Phosphoserine.

Belongs to the FAM21 family. In terms of assembly, component of the WASH core complex also described as WASH regulatory complex (SHRC) composed of WASHC1, WASHC2, WASHC3, WASHC4 and WASHC5; in the complex interacts (via N-terminus) directly with WASHC1. The WASH core complex associates with the F-actin-capping protein dimer (formed by CAPZA1, CAPZA2 or CAPZA3 and CAPZB) in a transient or substoichiometric manner which was initially described as WASH complex. Interacts with VPS35; mediates the association with the retromer CSC complex. Interacts with FKBP15. Interacts with CCDC93, CCDC22, VPS35L; indicative for an association of the WASH core complex with the CCC and retriever complexes. Directly interacts with TBC1D23.

It is found in the early endosome membrane. The protein localises to the cell membrane. Its function is as follows. Acts as a component of the WASH core complex that functions as a nucleation-promoting factor (NPF) at the surface of endosomes, where it recruits and activates the Arp2/3 complex to induce actin polymerization, playing a key role in the fission of tubules that serve as transport intermediates during endosome sorting. Mediates the recruitment of the WASH core complex to endosome membranes via binding to phospholipids and VPS35 of the retromer CSC. Mediates the recruitment of the F-actin-capping protein dimer to the WASH core complex probably promoting localized F-actin polymerization needed for vesicle scission. Via its C-terminus binds various phospholipids, most strongly phosphatidylinositol 4-phosphate (PtdIns-(4)P), phosphatidylinositol 5-phosphate (PtdIns-(5)P) and phosphatidylinositol 3,5-bisphosphate (PtdIns-(3,5)P2). Involved in the endosome-to-plasma membrane trafficking and recycling of SNX27-retromer-dependent cargo proteins, such as GLUT1. Required for the association of DNAJC13, ENTR1, ANKRD50 with retromer CSC subunit VPS35. Required for the endosomal recruitment of CCC and retriever complexes subunits COMMD1 and CCDC93 as well as the retrievere complex subunit VPS35L. This chain is WASH complex subunit 2, found in Mus musculus (Mouse).